We begin with the raw amino-acid sequence, 445 residues long: FAS-associated factor 2 (445 aa).

A2 is modified (N-acetylalanine). In terms of domain architecture, UBA spans 12-48 (EQTEKLLQFQDLTGIESMEQCRLALEQHNWNMEAAVQ). K167 bears the N6-acetyllysine mark. Residues 275–350 (SERLEREERN…EEKERKLECL (76 aa)) adopt a coiled-coil conformation. Residues 300 to 361 (SLRADQEKER…PEPSPDDPES (62 aa)) form a disordered region. Residues 303–348 (ADQEKERKKREEKERKRRKEEEVQQQKLAEERRRQNLQEEKERKLE) are compositionally biased toward basic and acidic residues. The UBX domain maps to 357 to 439 (DDPESVKIIF…GLSHTEVLFV (83 aa)).

In terms of assembly, identified in a complex that contains SEL1L, OS9, FAF2/UBXD8, UBE2J1/UBC6E and AUP1. Interacts with YOD1. Interacts (via N-terminus) with UBQLN2 (via C-terminus). Interacts with PNPLA2. Interacts with ZFAND2B; probably through VCP. Interacts with LMBR1L and UBAC2.

It is found in the cytoplasm. The protein localises to the lipid droplet. The protein resides in the endoplasmic reticulum. In terms of biological role, plays an important role in endoplasmic reticulum-associated degradation (ERAD) that mediates ubiquitin-dependent degradation of misfolded endoplasmic reticulum proteins. By controlling the steady-state expression of the IGF1R receptor, indirectly regulates the insulin-like growth factor receptor signaling pathway. Involved in inhibition of lipid droplet degradation by binding to phospholipase PNPL2 and inhibiting its activity by promoting dissociation of PNPL2 from its endogenous activator, ABHD5 which inhibits the rate of triacylglycerol hydrolysis. Involved in stress granule disassembly: associates with ubiquitinated G3BP1 in response to heat shock, thereby promoting interaction between ubiquitinated G3BP1 and VCP, followed by G3BP1 extraction from stress granules and stress granule disassembly. The protein is FAS-associated factor 2 (Faf2) of Mus musculus (Mouse).